The following is a 184-amino-acid chain: Large ribosomal subunit protein uL5 (184 aa).

Belongs to the universal ribosomal protein uL5 family. As to quaternary structure, part of the 50S ribosomal subunit; part of the 5S rRNA/L5/L18/L25 subcomplex. Contacts the 5S rRNA and the P site tRNA. Forms a bridge to the 30S subunit in the 70S ribosome.

In terms of biological role, this is one of the proteins that bind and probably mediate the attachment of the 5S RNA into the large ribosomal subunit, where it forms part of the central protuberance. In the 70S ribosome it contacts protein S13 of the 30S subunit (bridge B1b), connecting the 2 subunits; this bridge is implicated in subunit movement. Contacts the P site tRNA; the 5S rRNA and some of its associated proteins might help stabilize positioning of ribosome-bound tRNAs. The polypeptide is Large ribosomal subunit protein uL5 (Thermotoga sp. (strain RQ2)).